The sequence spans 233 residues: Small ribosomal subunit protein uS3 (233 aa).

The KH type-2 domain maps to valine 39 to arginine 107.

Belongs to the universal ribosomal protein uS3 family. As to quaternary structure, part of the 30S ribosomal subunit. Forms a tight complex with proteins S10 and S14.

Functionally, binds the lower part of the 30S subunit head. Binds mRNA in the 70S ribosome, positioning it for translation. This is Small ribosomal subunit protein uS3 from Photorhabdus laumondii subsp. laumondii (strain DSM 15139 / CIP 105565 / TT01) (Photorhabdus luminescens subsp. laumondii).